A 59-amino-acid polypeptide reads, in one-letter code: Transcription elongation factor Spt4 (59 aa).

The Zn(2+) site is built by C4, C7, C16, and C19.

The protein belongs to the archaeal Spt4 family. In terms of assembly, heterodimer composed of Spt4 and Spt5.

Its function is as follows. Stimulates transcription elongation. The chain is Transcription elongation factor Spt4 from Methanocaldococcus jannaschii (strain ATCC 43067 / DSM 2661 / JAL-1 / JCM 10045 / NBRC 100440) (Methanococcus jannaschii).